The following is a 232-amino-acid chain: Pseudaminic acid cytidylyltransferase (232 aa).

This sequence belongs to the CMP-NeuNAc synthase family. The cofactor is Mg(2+).

The catalysed reaction is pseudaminate + CTP = CMP-pseudaminate + diphosphate. Catalyzes the final step in the biosynthesis of pseudaminic acid, a sialic-acid-like sugar that is used to modify flagellin. Mediates the activation of pseudaminic acid with CMP by forming CMP-pseudaminic acid. This Campylobacter jejuni subsp. jejuni serotype O:23/36 (strain 81-176) protein is Pseudaminic acid cytidylyltransferase (pseF).